We begin with the raw amino-acid sequence, 821 residues long: Calpain-3 (821 aa).

The tract at residues 7 to 37 (ASVAPRTAAEPRSPGPVPHPAQSKATEAGGG) is disordered. Residues 74–417 (LYVDPEFPPD…FTKLEICNLT (344 aa)) enclose the Calpain catalytic domain. Catalysis depends on residues C129, H334, and N358. The domain III stretch occupies residues 418–586 (ADALQSDKLQ…KRNLSEEVEN (169 aa)). The tract at residues 587–649 (TISVDRPVKK…QPGSSDQESE (63 aa)) is linker. The interval 609-652 (ANSNKELGVDQESEEGKGKTSPDKQKQSPQPQPGSSDQESEEQQ) is disordered. The segment covering 622–634 (EEGKGKTSPDKQK) has biased composition (basic and acidic residues). The segment covering 635–645 (QSPQPQPGSSD) has biased composition (low complexity). EF-hand domains are found at residues 649 to 683 (EEQQ…VVNK), 692 to 725 (FTLE…NKIK), 722 to 757 (NKIK…AGFH), and 787 to 821 (VRLE…TMYA). The segment at 650 to 821 (EQQQFRNIFK…LEWLQLTMYA (172 aa)) is domain IV. 18 residues coordinate Ca(2+): A662, D665, E667, E672, D705, D707, S709, K711, E716, D735, D737, S739, T741, E746, D800, D802, D804, and I806.

This sequence belongs to the peptidase C2 family. In terms of assembly, homodimer; via EF-hand domain 4. Interacts with TTN/titin. Interacts with CMYA5; this interaction, which results in CMYA5 proteolysis, may protect CAPN3 from autolysis. Interacts with SIMC1. Interacts with UTP25; the interaction is required for CAPN3 translocation to the nucleolus. Isoform I is skeletal muscle specific.

It is found in the cytoplasm. It localises to the nucleus. The protein localises to the nucleolus. The catalysed reaction is Broad endopeptidase activity.. Its activity is regulated as follows. Activated by micromolar concentrations of calcium and inhibited by calpastatin. Functionally, calcium-regulated non-lysosomal thiol-protease. Proteolytically cleaves CTBP1 at 'His-409'. Mediates, with UTP25, the proteasome-independent degradation of p53/TP53. The chain is Calpain-3 from Homo sapiens (Human).